Consider the following 506-residue polypeptide: ATP synthase subunit alpha (506 aa).

171–178 (GDRQTGKT) is an ATP binding site.

It belongs to the ATPase alpha/beta chains family. In terms of assembly, F-type ATPases have 2 components, CF(1) - the catalytic core - and CF(0) - the membrane proton channel. CF(1) has five subunits: alpha(3), beta(3), gamma(1), delta(1), epsilon(1). CF(0) has four main subunits: a(1), b(1), b'(1) and c(9-12).

It localises to the cellular thylakoid membrane. It catalyses the reaction ATP + H2O + 4 H(+)(in) = ADP + phosphate + 5 H(+)(out). Functionally, produces ATP from ADP in the presence of a proton gradient across the membrane. The alpha chain is a regulatory subunit. The protein is ATP synthase subunit alpha of Trichormus variabilis (strain ATCC 29413 / PCC 7937) (Anabaena variabilis).